The following is a 207-amino-acid chain: Small ribosomal subunit protein uS4 (207 aa).

In terms of domain architecture, S4 RNA-binding spans 96–156 (SRLDNVVYRM…KKSHNQSRIY (61 aa)).

This sequence belongs to the universal ribosomal protein uS4 family. Part of the 30S ribosomal subunit. Contacts protein S5. The interaction surface between S4 and S5 is involved in control of translational fidelity.

Functionally, one of the primary rRNA binding proteins, it binds directly to 16S rRNA where it nucleates assembly of the body of the 30S subunit. With S5 and S12 plays an important role in translational accuracy. The polypeptide is Small ribosomal subunit protein uS4 (Blochmanniella floridana).